The following is a 415-amino-acid chain: Squalene synthase 2 (415 aa).

2 consecutive transmembrane segments (helical) span residues 281-301 (AIFRFCAIPQIMSIGTLALCY) and 392-412 (LIVILFIILAILYAYLSSNLP).

Belongs to the phytoene/squalene synthase family. Mg(2+) is required as a cofactor. It depends on Mn(2+) as a cofactor.

The protein resides in the endoplasmic reticulum membrane. The enzyme catalyses 2 (2E,6E)-farnesyl diphosphate + NADH + H(+) = squalene + 2 diphosphate + NAD(+). The catalysed reaction is 2 (2E,6E)-farnesyl diphosphate + NADPH + H(+) = squalene + 2 diphosphate + NADP(+). It participates in terpene metabolism; lanosterol biosynthesis; lanosterol from farnesyl diphosphate: step 1/3. In terms of biological role, component of the triterpene saponins (e.g. ginsenosides or panaxosides) and phytosterols biosynthetic pathways. Catalyzes the biosynthesis of squalene. This Panax ginseng (Korean ginseng) protein is Squalene synthase 2.